Reading from the N-terminus, the 316-residue chain is Protein lifeguard 2 (316 aa).

A disordered region spans residues 1-46 (MTQGKLSVANKAPGTEGQQQANGEKKETPAVPSAPPSYEEATSGEG). 3 helical membrane-spanning segments follow: residues 106–126 (VYTILLIQLLVTLGVVALFTF), 138–158 (PGWYWASYAVFFATYLTLACC), and 165–185 (FPWNLILLTIFTLSMAYLTGM). Residue Asn191 is glycosylated (N-linked (GlcNAc...) asparagine). 4 helical membrane passes run 194–214 (SVLLCLSITALVCLSVTVFSF), 225–245 (GVLFVLLMTLFFSGLILAILL), 251–271 (PWLHAVYAVLGAGVFTLFLAF), and 290–310 (IFGALNIYLDIIYIFTFFLQL).

Belongs to the BI1 family. LFG subfamily. Interacts with FAS/TNFRSF6 and BAX.

The protein localises to the cell membrane. It is found in the membrane raft. The protein resides in the postsynaptic cell membrane. Antiapoptotic protein which protects cells uniquely from Fas-induced apoptosis. Regulates Fas-mediated apoptosis in neurons by interfering with caspase-8 activation. Plays a role in cerebellar development by affecting cerebellar size, internal granular layer (IGL) thickness, and Purkinje cell (PC) development. This is Protein lifeguard 2 (FAIM2) from Bos taurus (Bovine).